We begin with the raw amino-acid sequence, 378 residues long: MAKKLKKNEEITKKFGDERRKALDDALKNIEKDFGKGAVMRLGERAEQKVQVMSSGSLALDIALGAGGYPKGRIIEIYGPESSGKTTVALHAVAQAQKEGGIAAFIDAEHALDPAYAAALGVNIDELLLSQPDSGEQGLEIAGKLIDSGAVDLVVVDSVAALVPRAEIDGDIGDSHVGLQARMMSQAMRKLSASINKTKTIAIFINQLREKVGVMFGNPETTPGGRALKFYASVRLDVRGTTQIKGTGDQKDSSIGKETKIKVVKNKVAPPFKVAEVEIMYGEGISRTGELVKIASDLDIIQKAGAWFSYNGEKIGQGSENAKRYLADHPQLFDEIDRKVRVKFGLLEESEEESAMAVASEETDDLALDLDNGIEIED.

79–86 (GPESSGKT) lines the ATP pocket.

Belongs to the RecA family.

It localises to the cytoplasm. Can catalyze the hydrolysis of ATP in the presence of single-stranded DNA, the ATP-dependent uptake of single-stranded DNA by duplex DNA, and the ATP-dependent hybridization of homologous single-stranded DNAs. It interacts with LexA causing its activation and leading to its autocatalytic cleavage. This Streptococcus pyogenes serotype M2 (strain MGAS10270) protein is Protein RecA.